A 235-amino-acid chain; its full sequence is Proteasome subunit alpha type-2 (235 aa).

The protein belongs to the peptidase T1A family. As to quaternary structure, the 26S proteasome consists of a 20S proteasome core and two 19S regulatory subunits. The 20S proteasome core is composed of 28 subunits that are arranged in four stacked rings, resulting in a barrel-shaped structure. The two end rings are each formed by seven alpha subunits, and the two central rings are each formed by seven beta subunits. The catalytic chamber with the active sites is on the inside of the barrel.

It localises to the cytoplasm. The protein localises to the nucleus. In terms of biological role, the proteasome is a multicatalytic proteinase complex which is characterized by its ability to cleave peptides with Arg, Phe, Tyr, Leu, and Glu adjacent to the leaving group at neutral or slightly basic pH. The proteasome has an ATP-dependent proteolytic activity. The sequence is that of Proteasome subunit alpha type-2 (PAB1) from Oryza sativa subsp. indica (Rice).